Reading from the N-terminus, the 209-residue chain is Orotate phosphoribosyltransferase (209 aa).

5-phospho-alpha-D-ribose 1-diphosphate contacts are provided by residues Arg-96, Lys-100, His-102, and Glu-122–Ser-130. Ser-126 lines the orotate pocket.

The protein belongs to the purine/pyrimidine phosphoribosyltransferase family. PyrE subfamily. Homodimer. Mg(2+) serves as cofactor.

It carries out the reaction orotidine 5'-phosphate + diphosphate = orotate + 5-phospho-alpha-D-ribose 1-diphosphate. It functions in the pathway pyrimidine metabolism; UMP biosynthesis via de novo pathway; UMP from orotate: step 1/2. In terms of biological role, catalyzes the transfer of a ribosyl phosphate group from 5-phosphoribose 1-diphosphate to orotate, leading to the formation of orotidine monophosphate (OMP). This is Orotate phosphoribosyltransferase from Lactococcus lactis subsp. cremoris (strain SK11).